The chain runs to 115 residues: Meiotically up-regulated gene 106 protein (115 aa).

The first 34 residues, 1 to 34, serve as a signal peptide directing secretion; sequence MSIKVEWIKFTRLKKCATLLVQLSLLRYRYMVLA. 2 helical membrane passes run 41–60 and 81–103; these read CIVV…GALF and GVKL…FTPY.

The protein resides in the membrane. Has a role in meiosis. The polypeptide is Meiotically up-regulated gene 106 protein (mug106) (Schizosaccharomyces pombe (strain 972 / ATCC 24843) (Fission yeast)).